Reading from the N-terminus, the 321-residue chain is Fructose-1,6-bisphosphatase 2 class 2 (321 aa).

Mn(2+) contacts are provided by aspartate 32, glutamate 56, aspartate 84, and glutamate 87. Substrate-binding positions include 87 to 89, tyrosine 118, 163 to 165, 185 to 187, and glycine 209; these read EGT, KPR, and DGD. Residue glutamate 212 participates in Mn(2+) binding.

Belongs to the FBPase class 2 family. Homodimer. Mn(2+) is required as a cofactor.

The catalysed reaction is beta-D-fructose 1,6-bisphosphate + H2O = beta-D-fructose 6-phosphate + phosphate. Its activity is regulated as follows. Competitively inhibited by low concentrations of phosphate (IC50 of 1.2 mM) and is also sensitive to Li(+) (IC50 of 15.8 mM). Also inhibited by 1 mM ATP or 50 mM KCl (60% and 20% residual activity, respectively). Slightly activated (40-50%) by the addition of 1 mM dithiothreitol in vitro. Its function is as follows. Catalyzes the hydrolysis of fructose 1,6-bisphosphate to fructose 6-phosphate. Also displays a low activity toward glucose 1,6-bisphosphate, and no activity against ribulose 1,5-bisphosphate, fructose 2,6-bisphosphate, or fructose 1-phosphate. The chain is Fructose-1,6-bisphosphatase 2 class 2 (yggF) from Escherichia coli (strain K12).